A 496-amino-acid chain; its full sequence is Deoxyribodipyrimidine photo-lyase (496 aa).

In terms of domain architecture, Photolyase/cryptochrome alpha/beta spans 28-160 (GPVVYWMFRD…EVDAHNVVPM (133 aa)). Residues Tyr-256, 269–273 (LSGLS), 307–315 (ELIVRRELS), and 415–417 (DGR) each bind FAD. Glu-307 serves as a coordination point for DNA.

Belongs to the DNA photolyase class-2 family. The cofactor is FAD. As to expression, highly expressed in flowers. Expressed in roots and stems.

It is found in the nucleus. It carries out the reaction cyclobutadipyrimidine (in DNA) = 2 pyrimidine residues (in DNA).. Involved in repair of UV radiation-induced DNA damage. Catalyzes the light-dependent monomerization (300-600 nm) of cyclobutylpyrimidine dimers (CPDs), which are formed between adjacent bases on the same DNA strand upon exposure to ultraviolet radiation. Required for plant survival in the presence of UV-B light. Not involved in the repair of (6-4) photoproducts. The protein is Deoxyribodipyrimidine photo-lyase (PHR1) of Arabidopsis thaliana (Mouse-ear cress).